The following is a 150-amino-acid chain: Arginine repressor (150 aa).

The protein belongs to the ArgR family.

The protein resides in the cytoplasm. Its pathway is amino-acid biosynthesis; L-arginine biosynthesis [regulation]. Regulates arginine biosynthesis genes. The chain is Arginine repressor from Symbiobacterium thermophilum (strain DSM 24528 / JCM 14929 / IAM 14863 / T).